A 528-amino-acid chain; its full sequence is Light-independent protochlorophyllide reductase subunit B (528 aa).

Position 36 (aspartate 36) interacts with [4Fe-4S] cluster. Aspartate 274 serves as the catalytic Proton donor. 409-410 (GL) is a substrate binding site. The segment at 429–471 (GPSHHGGHAPKPMHDAPAASAAAGAEASMAEETAAPSQDAPAA) is disordered. Over residues 444-465 (APAASAAAGAEASMAEETAAPS) the composition is skewed to low complexity.

The protein belongs to the ChlB/BchB/BchZ family. As to quaternary structure, protochlorophyllide reductase is composed of three subunits; BchL, BchN and BchB. Forms a heterotetramer of two BchB and two BchN subunits. Requires [4Fe-4S] cluster as cofactor.

The catalysed reaction is chlorophyllide a + oxidized 2[4Fe-4S]-[ferredoxin] + 2 ADP + 2 phosphate = protochlorophyllide a + reduced 2[4Fe-4S]-[ferredoxin] + 2 ATP + 2 H2O. The protein operates within porphyrin-containing compound metabolism; bacteriochlorophyll biosynthesis (light-independent). Component of the dark-operative protochlorophyllide reductase (DPOR) that uses Mg-ATP and reduced ferredoxin to reduce ring D of protochlorophyllide (Pchlide) to form chlorophyllide a (Chlide). This reaction is light-independent. The NB-protein (BchN-BchB) is the catalytic component of the complex. The polypeptide is Light-independent protochlorophyllide reductase subunit B (Dinoroseobacter shibae (strain DSM 16493 / NCIMB 14021 / DFL 12)).